The following is a 307-amino-acid chain: Probable RuBisCO transcriptional regulator (307 aa).

Positions 4–61 (FTLQQLRILKAVATEKNFTKAAELLYLSQPSLSKQIKTLEKNLDILLVNRENNKISLT) constitute an HTH lysR-type domain. A DNA-binding region (H-T-H motif) is located at residues 21-40 (FTKAAELLYLSQPSLSKQIK).

The protein belongs to the LysR transcriptional regulatory family.

The protein localises to the plastid. The protein resides in the chloroplast. Functionally, trans-acting transcriptional regulator of RuBisCO genes (rbcL and rbcS) expression. In Phaeodactylum tricornutum (strain CCAP 1055/1), this protein is Probable RuBisCO transcriptional regulator (rbcR).